Reading from the N-terminus, the 322-residue chain is Myeloid-associated differentiation marker (322 aa).

The span at 1–18 shows a compositional bias: low complexity; the sequence is MPVTVTRTTITTTTTSSS. A disordered region spans residues 1–21; it reads MPVTVTRTTITTTTTSSSGLG. S22 is modified (phosphoserine). MARVEL domains lie at 31-163 and 168-319; these read ALTQ…ARPG and YMAT…HLVF. 8 consecutive transmembrane segments (helical) span residues 41 to 61, 70 to 90, 101 to 121, 137 to 157, 171 to 191, 203 to 223, 239 to 259, and 294 to 314; these read LLQLVSTCVAFSLVASVGAWT, FTWCFCFSVTLIILIVELCGL, FPITFACYAALFCLSASIIYP, AIAATFFSCIACVAYATEVAW, TVPGLLKVLETFVACIIFAFI, LEWCVAVYAICFILAAIAILL, FLSGLALLSVLLYATALVLWP, and LAVAILTAINLLAYVADLVHS.

This sequence belongs to the MAL family. Widely expressed. Not detected in thymus.

The protein localises to the membrane. The chain is Myeloid-associated differentiation marker (MYADM) from Homo sapiens (Human).